Reading from the N-terminus, the 101-residue chain is Apolipoprotein C-II (101 aa).

An N-terminal signal peptide occupies residues 1 to 22 (MGTRFLLALCLVLLVLGFEVQG). Positions 66–74 (AVDEKLRDL) are lipid binding. Residues 78-101 (STAAMSTYTGIFTDQVLSVLKGEE) form a lipoprotein lipase cofactor region.

It belongs to the apolipoprotein C2 family. Post-translationally, proapolipoprotein C-II is synthesized as a sialic acid containing glycoprotein which is subsequently desialylated prior to its proteolytic processing. In terms of processing, proapolipoprotein C-II, the major form found in plasma undergoes proteolytic cleavage of its N-terminal hexapeptide to generate apolipoprotein C-II, which occurs as the minor form in plasma.

The protein resides in the secreted. Functionally, component of chylomicrons, very low-density lipoproteins (VLDL), low-density lipoproteins (LDL), and high-density lipoproteins (HDL) in plasma. Plays an important role in lipoprotein metabolism as an activator of lipoprotein lipase. Both proapolipoprotein C-II and apolipoprotein C-II can activate lipoprotein lipase. The sequence is that of Apolipoprotein C-II (APOC2) from Macaca fascicularis (Crab-eating macaque).